The sequence spans 116 residues: UPF0102 protein LA_2381 (116 aa).

It belongs to the UPF0102 family.

The sequence is that of UPF0102 protein LA_2381 from Leptospira interrogans serogroup Icterohaemorrhagiae serovar Lai (strain 56601).